Here is a 754-residue protein sequence, read N- to C-terminus: 5-methyltetrahydropteroyltriglutamate--homocysteine methyltransferase (754 aa).

5-methyltetrahydropteroyltri-L-glutamate-binding positions include 15–18 (RELK) and lysine 114. L-homocysteine-binding positions include 430–432 (IGS) and glutamate 483. L-methionine contacts are provided by residues 430–432 (IGS) and glutamate 483. Residues 514-515 (RC) and tryptophan 560 each bind 5-methyltetrahydropteroyltri-L-glutamate. Aspartate 598 lines the L-homocysteine pocket. L-methionine is bound at residue aspartate 598. A 5-methyltetrahydropteroyltri-L-glutamate-binding site is contributed by glutamate 604. Zn(2+) contacts are provided by histidine 641, cysteine 643, and glutamate 665. The active-site Proton donor is the histidine 694. Cysteine 726 is a Zn(2+) binding site.

The protein belongs to the vitamin-B12 independent methionine synthase family. Requires Zn(2+) as cofactor.

It carries out the reaction 5-methyltetrahydropteroyltri-L-glutamate + L-homocysteine = tetrahydropteroyltri-L-glutamate + L-methionine. It participates in amino-acid biosynthesis; L-methionine biosynthesis via de novo pathway; L-methionine from L-homocysteine (MetE route): step 1/1. In terms of biological role, catalyzes the transfer of a methyl group from 5-methyltetrahydrofolate to homocysteine resulting in methionine formation. This chain is 5-methyltetrahydropteroyltriglutamate--homocysteine methyltransferase, found in Campylobacter jejuni subsp. doylei (strain ATCC BAA-1458 / RM4099 / 269.97).